We begin with the raw amino-acid sequence, 100 residues long: Urease subunit gamma (100 aa).

This sequence belongs to the urease gamma subunit family. As to quaternary structure, heterotrimer of UreA (gamma), UreB (beta) and UreC (alpha) subunits. Three heterotrimers associate to form the active enzyme.

The protein localises to the cytoplasm. It carries out the reaction urea + 2 H2O + H(+) = hydrogencarbonate + 2 NH4(+). The protein operates within nitrogen metabolism; urea degradation; CO(2) and NH(3) from urea (urease route): step 1/1. This chain is Urease subunit gamma, found in Synechococcus sp. (strain RCC307).